The sequence spans 288 residues: Bifunctional protein FolD (288 aa).

NADP(+) is bound by residues 165–167 (GRS) and serine 190.

The protein belongs to the tetrahydrofolate dehydrogenase/cyclohydrolase family. In terms of assembly, homodimer.

The catalysed reaction is (6R)-5,10-methylene-5,6,7,8-tetrahydrofolate + NADP(+) = (6R)-5,10-methenyltetrahydrofolate + NADPH. It carries out the reaction (6R)-5,10-methenyltetrahydrofolate + H2O = (6R)-10-formyltetrahydrofolate + H(+). The protein operates within one-carbon metabolism; tetrahydrofolate interconversion. In terms of biological role, catalyzes the oxidation of 5,10-methylenetetrahydrofolate to 5,10-methenyltetrahydrofolate and then the hydrolysis of 5,10-methenyltetrahydrofolate to 10-formyltetrahydrofolate. This chain is Bifunctional protein FolD, found in Bdellovibrio bacteriovorus (strain ATCC 15356 / DSM 50701 / NCIMB 9529 / HD100).